Here is a 430-residue protein sequence, read N- to C-terminus: Trigger factor (430 aa).

Residues 157–242 enclose the PPIase FKBP-type domain; the sequence is GDLVALETWS…AVEVSEPVLP (86 aa).

It belongs to the FKBP-type PPIase family. Tig subfamily.

It localises to the cytoplasm. It carries out the reaction [protein]-peptidylproline (omega=180) = [protein]-peptidylproline (omega=0). Functionally, involved in protein export. Acts as a chaperone by maintaining the newly synthesized protein in an open conformation. Functions as a peptidyl-prolyl cis-trans isomerase. The chain is Trigger factor from Xanthomonas axonopodis pv. citri (strain 306).